The following is a 358-amino-acid chain: Trans-enoyl reductase milB (358 aa).

NADP(+) contacts are provided by residues 48–51, 170–173, 193–196, Tyr211, 258–259, and 349–350; these read VDTK, ATAT, SAKH, LD, and VR.

It belongs to the zinc-containing alcohol dehydrogenase family. Monomer.

It catalyses the reaction 10 malonyl-CoA + acetyl-CoA + 3 AH2 + 8 NADPH + 18 H(+) = cordypyrone A + 3 A + 10 CO2 + 8 NADP(+) + 11 CoA + 8 H2O. It functions in the pathway secondary metabolite biosynthesis. Trans-enoyl reductase; part of the gene cluster that mediates the biosynthesis of cordypyrones A and B, 2 pyrones that show modest activities against pathogenic bacteria including methicillin-resistant Staphylococcus aureus (MRSA), Mycobacterium tuberculosis and Bacillus cereus. The HR-PKS milA catalyzes the formation of cordypyrones A via condensation of one acetate with 10 malonate units. Since milA lacks an enoyl reductase domain, the 2 beta-keto processing domains DH and KR of milA collaborate with the trans-enoyl reductase milB to catalyze the different levels of reduction. The cytochrome P450 monooxygenase milC then hydroxylates the C-22 of cordypyrones A to yield cordypyrones B. The polypeptide is Trans-enoyl reductase milB (Cordyceps militaris (strain CM01) (Caterpillar fungus)).